Reading from the N-terminus, the 175-residue chain is Protein ppBat (175 aa).

Zn(2+) is bound by residues C74 and C111. Riboflavin contacts are provided by N161 and W164.

In terms of assembly, homodimer.

Its function is as follows. Binds flavin derivatives, such as lumichrome, riboflavin, FMN, and FAD. May act as a flavin storage protein. Appears to lack proteolytic or chaperone activities. The sequence is that of Protein ppBat from Bacteroides thetaiotaomicron (strain ATCC 29148 / DSM 2079 / JCM 5827 / CCUG 10774 / NCTC 10582 / VPI-5482 / E50).